The following is a 318-amino-acid chain: Methionine import ATP-binding protein MetN (318 aa).

Residues 2 to 237 (IEIKDVGKIF…PEGELKKIIE (236 aa)) enclose the ABC transporter domain. Residue 34–41 (GRSGAGKS) participates in ATP binding.

It belongs to the ABC transporter superfamily. Methionine importer (TC 3.A.1.24) family. In terms of assembly, the complex is composed of two ATP-binding proteins (MetN), two transmembrane proteins (MetI) and a solute-binding protein (MetQ).

It is found in the cell membrane. The enzyme catalyses L-methionine(out) + ATP + H2O = L-methionine(in) + ADP + phosphate + H(+). It catalyses the reaction D-methionine(out) + ATP + H2O = D-methionine(in) + ADP + phosphate + H(+). Part of the ABC transporter complex MetNIQ involved in methionine import. Responsible for energy coupling to the transport system. In Clostridium tetani (strain Massachusetts / E88), this protein is Methionine import ATP-binding protein MetN.